A 450-amino-acid polypeptide reads, in one-letter code: Hydrolase ffsE (450 aa).

Ser-266 functions as the Nucleophile in the catalytic mechanism.

Belongs to the AB hydrolase superfamily. FUS2 hydrolase family. In terms of assembly, homodimer.

It participates in mycotoxin biosynthesis. Functionally, hydrolase; part of the gene cluster that mediates the biosynthesis of the cytotoxic leucine-containing cytochalasans, including aspochalasin C, aspochalasin E, TMC-169, flavichalasine F, aspergillin PZ, aspochalasin M and flavichalasine G. The first step in the pathway is catalyzed by the hybrid PKS-NRPS ffsA that utilizes 8 units of malonyl-CoA to iteratively assemble the octaketide chain before addition of L-leucine by the C-terminal NRPS modules. Because ffsA lacks a designated enoylreductase (ER) domain, the required activity is provided the enoyl reductase fssC. The methyltransferase (MT) domain of ffsA catalyzes the alpha-methylation at C10 and C14 using S-adenosyl-L-methionine as the methyl-donating cosubstrate. Reduction by the hydrolyase ffsE, followed by dehydration and intra-molecular Diels-Alder cyclization by the Diels-Alderase ffsF then yield the required isoindolone-fused macrocycle. A number of oxidative steps catalyzed by the tailoring cytochrome P450 monooxygenase ffsD, the FAD-linked oxidoreductase ffsJ and the short-chain dehydrogenase/reductase ffsI, are further required to afford the final products. This is Hydrolase ffsE from Aspergillus flavipes.